Reading from the N-terminus, the 117-residue chain is DNA-directed RNA polymerase subunit omega (117 aa).

The segment covering 96 to 105 has biased composition (basic and acidic residues); the sequence is KEEAEEEAKQ. The disordered stretch occupies residues 96–117; it reads KEEAEEEAKQKNSRAAKAAAAE. Positions 108 to 117 are enriched in low complexity; sequence SRAAKAAAAE.

The protein belongs to the RNA polymerase subunit omega family. As to quaternary structure, the RNAP catalytic core consists of 2 alpha, 1 beta, 1 beta' and 1 omega subunit. When a sigma factor is associated with the core the holoenzyme is formed, which can initiate transcription.

It carries out the reaction RNA(n) + a ribonucleoside 5'-triphosphate = RNA(n+1) + diphosphate. Promotes RNA polymerase assembly. Latches the N- and C-terminal regions of the beta' subunit thereby facilitating its interaction with the beta and alpha subunits. The protein is DNA-directed RNA polymerase subunit omega (rpoZ) of Lactococcus lactis subsp. lactis (strain IL1403) (Streptococcus lactis).